We begin with the raw amino-acid sequence, 249 residues long: MAADLLDVHGLLFKRQQYKEADLLAKLWTKELGIVTVIAKGGMRPKSQLAAAVLPFTEGTFSILTRYKGISQLRTYKKLSQHDELFTDLDKNAYLSYLFDLADHAFSEYQKLGGYYDLLLVAFNRIVAGQDPEIIAQIVQLQLLDAFGVAPQLGACVICGKEKGIFDYSIAAGGVVCSDHFRSVSRLHLSPKATALIRTLALLPISRLGEIQIGEDLKKESRRAIAQIYQATVDLHLPSLRFLNEVRGS.

The protein belongs to the RecO family.

In terms of biological role, involved in DNA repair and RecF pathway recombination. The chain is DNA repair protein RecO from Lactobacillus delbrueckii subsp. bulgaricus (strain ATCC BAA-365 / Lb-18).